Here is a 117-residue protein sequence, read N- to C-terminus: Hydrogenase maturation factor HypA (117 aa).

His2 provides a ligand contact to Ni(2+). Residues Cys73, Cys76, Cys89, and Cys92 each contribute to the Zn(2+) site.

The protein belongs to the HypA/HybF family.

Its function is as follows. Involved in the maturation of [NiFe] hydrogenases. Required for nickel insertion into the metal center of the hydrogenase. This Chlorobium luteolum (strain DSM 273 / BCRC 81028 / 2530) (Pelodictyon luteolum) protein is Hydrogenase maturation factor HypA.